The following is a 350-amino-acid chain: Proton-activated chloride channel (350 aa).

The interval 1–51 is disordered; the sequence is MEAIRKELSRSYQELNDETDPIARDPEGAQEEEQEEAASAVVPDRDSDRSN. The Cytoplasmic segment spans residues 1–63; the sequence is MEAIRKELSR…VHFSRTCLKN (63 aa). The helical transmembrane segment at 64–84 threads the bilayer; it reads VFSVLLIFVYLLLMGVAVFLV. Residues 85–297 are Extracellular-facing; the sequence is YQTITDFRDK…KDPYIQEIQD (213 aa). A helical transmembrane segment spans residues 298–318; it reads IITANPWSMIALLCSVFLVLF. Residues 319–350 are Cytoplasmic-facing; the sequence is KAADFAKLSVKWMIKVRRRHLKKRTRELNHIS.

Belongs to the proton-activated chloride channel family.

It localises to the cell membrane. The enzyme catalyses chloride(in) = chloride(out). Functionally, chloride channel gated by pH that facilitates the entry of chloride ions into cells upon exposure to extracellular acidic pH. The chain is Proton-activated chloride channel from Xenopus laevis (African clawed frog).